A 376-amino-acid chain; its full sequence is UPF0754 membrane protein SSP0953 (376 aa).

2 helical membrane passes run 4–24 and 356–376; these read FLVI…TNVI and FLGF…AIFV.

This sequence belongs to the UPF0754 family.

It localises to the cell membrane. This is UPF0754 membrane protein SSP0953 from Staphylococcus saprophyticus subsp. saprophyticus (strain ATCC 15305 / DSM 20229 / NCIMB 8711 / NCTC 7292 / S-41).